The sequence spans 515 residues: MKDSSNLLEMRNISKEFPGVKALDNVTLKVKKGSVHALMGENGAGKSTLMKCLFGIYHPNSGEIFISGQKVQFKNSKHALDNGVSMVHQELNQVRERNVMDNLWLGRYPKKGLFIDEKKMYDETEKIFKDLDINVNPRDKVSTLSVSQMQMVEIAKAVSYKSKIIVMDEPTSSLTEKEVSHLFKIINKLRKQGISIIYISHKMEEILEISDEVTIMRDGKWIATEKASDLTMDLIIKLMVGRELTDRFPKKDHIPKETILEVNNLSDAKNELKNVSFKLRKGEILGIAGLVGAKRTETLETLFGLREKGSGDIILHGKKVDNSKPFKAMQNGFALVTEERRQTGIFGKLPIDFNSIIANIDSYKTSTGLLSNGRISKDTQWVINSMKVKTPSQKTLIGSLSGGNQQKIVIGKWLLRKPEILLLDEPTRGIDVGAKFEIYQLINELAKEDKGIIMVSSEMPELLGVCDRILVMSNGMISGIVNANQTTQEEIMHLSAKYLSVTGGVNNANQIKEKV.

ABC transporter domains are found at residues 8–243 (LEMR…VGRE) and 254–499 (IPKE…AKYL). 40–47 (GENGAGKS) provides a ligand contact to ATP.

This sequence belongs to the ABC transporter superfamily. Galactose/methyl galactoside importer (TC 3.A.1.2.3) family. The complex is composed of one ATP-binding protein (MglA), two transmembrane proteins (MglC) and a solute-binding protein (MglB).

Its subcellular location is the cell membrane. The enzyme catalyses D-galactose(out) + ATP + H2O = D-galactose(in) + ADP + phosphate + H(+). It catalyses the reaction methyl beta-D-galactoside(out) + ATP + H2O = methyl beta-D-galactoside(in) + ADP + phosphate + H(+). Its function is as follows. Part of the ABC transporter complex MglABC involved in galactose/methyl galactoside import. Responsible for energy coupling to the transport system. This chain is Galactose/methyl galactoside import ATP-binding protein MglA, found in Clostridium perfringens (strain SM101 / Type A).